A 398-amino-acid polypeptide reads, in one-letter code: uncharacterized protein (398 aa).

This is an uncharacterized protein from Ostreid herpesvirus 1 (isolate France) (OsHV-1).